The sequence spans 447 residues: N-succinylarginine dihydrolase (447 aa).

Substrate contacts are provided by residues Ala19–Ser28, Asn110, and His137–Arg138. Glu174 is an active-site residue. Substrate is bound at residue Arg214. His250 is a catalytic residue. Substrate-binding residues include Asp252 and Asn365. Catalysis depends on Cys371, which acts as the Nucleophile.

This sequence belongs to the succinylarginine dihydrolase family. As to quaternary structure, homodimer.

The enzyme catalyses N(2)-succinyl-L-arginine + 2 H2O + 2 H(+) = N(2)-succinyl-L-ornithine + 2 NH4(+) + CO2. It participates in amino-acid degradation; L-arginine degradation via AST pathway; L-glutamate and succinate from L-arginine: step 2/5. Catalyzes the hydrolysis of N(2)-succinylarginine into N(2)-succinylornithine, ammonia and CO(2). The polypeptide is N-succinylarginine dihydrolase (Acinetobacter baumannii (strain SDF)).